A 195-amino-acid polypeptide reads, in one-letter code: Nicotinamide riboside kinase 2 (195 aa).

9–17 (GVTNGGKTT) contacts ATP. Mg(2+) contacts are provided by Thr16 and Asp35. Asp35 serves as the catalytic Proton acceptor. Residues 35-38 (DDFF) and 54-55 (WD) each bind substrate. An ATP-binding site is contributed by Arg130. Substrate is bound by residues Arg131 and 136–137 (YM). ATP is bound by residues 134-136 (RTY) and 174-176 (KSP).

It belongs to the uridine kinase family. NRK subfamily. Monomer. Interacts with ITGB1 alone or when associated with alpha-7, but not with alpha-5. Expressed in skeletal muscle (at protein level).

It carries out the reaction beta-nicotinamide D-riboside + ATP = beta-nicotinamide D-ribonucleotide + ADP + H(+). The catalysed reaction is beta-D-ribosylnicotinate + ATP = nicotinate beta-D-ribonucleotide + ADP + H(+). It functions in the pathway cofactor biosynthesis; NAD(+) biosynthesis. In terms of biological role, catalyzes the phosphorylation of nicotinamide riboside (NR) and nicotinic acid riboside (NaR) to form nicotinamide mononucleotide (NMN) and nicotinic acid mononucleotide (NaMN). Reduces laminin matrix deposition and cell adhesion to laminin, but not to fibronectin. Involved in the regulation of PXN at the protein level and of PXN tyrosine phosphorylation. May play a role in the regulation of terminal myogenesis. This chain is Nicotinamide riboside kinase 2 (Nmrk2), found in Mus musculus (Mouse).